The chain runs to 139 residues: Transcriptional regulator WhiB5 (139 aa).

In terms of domain architecture, 4Fe-4S Wbl-type spans P4–Y77. Residues C5, C41, C45, and C53 each coordinate [4Fe-4S] cluster.

This sequence belongs to the WhiB family. Requires [4Fe-4S] cluster as cofactor. Post-translationally, the Fe-S cluster can be nitrosylated by nitric oxide (NO). In terms of processing, upon Fe-S cluster removal intramolecular disulfide bonds are formed.

It localises to the cytoplasm. Functionally, a transcription factor that is probably redox-responsive. Probably plays a role in immunomodulation and reactivation after chronic infection. Its induction results in transcription of a number of genes including sigM, and the genes for 2 type VII secretion systems ESX-2 and ESX-4. Seems to negatively regulate its own expression. The apo-form has been shown to act as a protein disulfide reductase. The apo- but not holo-form probably binds DNA. In Mycobacterium tuberculosis (strain ATCC 25618 / H37Rv), this protein is Transcriptional regulator WhiB5 (whiB5).